Consider the following 860-residue polypeptide: Ras GTPase-activating-like protein gapA (860 aa).

The span at 1–20 (MEGLEIEDEDVILLDEDDDS) shows a compositional bias: acidic residues. Residues 1 to 48 (MEGLEIEDEDVILLDEDDDSSSSSTVNNSSSNIKNNGNTNNNIGNDDS) are disordered. Low complexity predominate over residues 21 to 46 (SSSSTVNNSSSNIKNNGNTNNNIGND). A coiled-coil region spans residues 146-185 (AEIQELKRNMVAEIRRNHLLERDVNKLDKRIALLIKHRSN). Residues 269-515 (FLILSLFRLA…SIVRQYLEDL (247 aa)) enclose the Ras-GAP domain. Residues 663-732 (NNPQLSSNAE…TIALRDLRKH (70 aa)) adopt a coiled-coil conformation.

As to quaternary structure, heterotetramer. Quaternary complex with activated rac1A, ctxA and ctxB in the absence of rgaA.

Part of signaling pathway that is required for completion of cytokinesis. gapA and rgaA control cortexillin localization to the cleavage furrow and hence may be involved in cleavage of the midbody in the final stage of cytokinesis by regulating the actin cytoskeleton. Forms a complex by linking activated rac1A to ctxA in the absence of rgaA. Assembly of this complex is necessary for the recruitment of cortexillin to the midzone of the dividing cell. The polypeptide is Ras GTPase-activating-like protein gapA (gapA) (Dictyostelium discoideum (Social amoeba)).